A 283-amino-acid chain; its full sequence is Probable endonuclease 4 (283 aa).

9 residues coordinate Zn(2+): His-69, His-109, Glu-145, Asp-179, His-182, His-216, Asp-229, His-231, and Glu-261.

It belongs to the AP endonuclease 2 family. Requires Zn(2+) as cofactor.

It catalyses the reaction Endonucleolytic cleavage to 5'-phosphooligonucleotide end-products.. Functionally, endonuclease IV plays a role in DNA repair. It cleaves phosphodiester bonds at apurinic or apyrimidinic (AP) sites, generating a 3'-hydroxyl group and a 5'-terminal sugar phosphate. This Campylobacter concisus (strain 13826) protein is Probable endonuclease 4.